The primary structure comprises 859 residues: Autoinducer 2 sensor kinase/phosphatase LuxQ (859 aa).

Helical transmembrane passes span 15–35 (ATLI…GIFI) and 280–300 (IQHI…ALMS). Residues 489–711 (KMSHEIRTPI…TFVITLPVKD (223 aa)) enclose the Histidine kinase domain. Histidine 492 is subject to Phosphohistidine; by autocatalysis. The 116-residue stretch at 736 to 851 (KVLLVEDNHT…ALHEAFVDFK (116 aa)) folds into the Response regulatory domain. The residue at position 785 (aspartate 785) is a 4-aspartylphosphate.

As to quaternary structure, binds the complex formed by AI-2 and LuxP.

It localises to the cell inner membrane. It catalyses the reaction ATP + protein L-histidine = ADP + protein N-phospho-L-histidine.. Functionally, at low cell density, in absence of AI-2 (autoinducer 2), LuxQ has a kinase activity and autophosphorylates on a histidine residue. The phosphoryl group is then transferred to an aspartate residue in the response regulator domain. The phosphoryl group is transferred to LuxU, and ultimately to LuxO. At high cell density, in the presence of AI-2, the kinase activity is inactivated, and the response regulator domain has a phosphatase activity. This chain is Autoinducer 2 sensor kinase/phosphatase LuxQ (luxQ), found in Vibrio harveyi (Beneckea harveyi).